Consider the following 449-residue polypeptide: UDP-N-acetylmuramate--L-alanine ligase (449 aa).

121-127 is a binding site for ATP; it reads GAHGKSS.

Belongs to the MurCDEF family.

Its subcellular location is the cytoplasm. The enzyme catalyses UDP-N-acetyl-alpha-D-muramate + L-alanine + ATP = UDP-N-acetyl-alpha-D-muramoyl-L-alanine + ADP + phosphate + H(+). The protein operates within cell wall biogenesis; peptidoglycan biosynthesis. Its function is as follows. Cell wall formation. The polypeptide is UDP-N-acetylmuramate--L-alanine ligase (Helicobacter pylori (strain ATCC 700392 / 26695) (Campylobacter pylori)).